Reading from the N-terminus, the 377-residue chain is Chaperone protein DnaJ (377 aa).

One can recognise a J domain in the interval 4–69; sequence DYYEVLGVSK…EKRARYDQMG (66 aa). The segment at 131 to 213 adopts a CR-type zinc-finger fold; the sequence is GTEKEIQVPR…CSGKGTTRKV (83 aa). Cysteine 144, cysteine 147, cysteine 161, cysteine 164, cysteine 187, cysteine 190, cysteine 201, and cysteine 204 together coordinate Zn(2+). CXXCXGXG motif repeat units follow at residues 144–151, 161–168, 187–194, and 201–208; these read CTECHGSG, CSQCHGTG, CPACNGSG, and CKECSGKG.

This sequence belongs to the DnaJ family. As to quaternary structure, homodimer. It depends on Zn(2+) as a cofactor.

The protein localises to the cytoplasm. In terms of biological role, participates actively in the response to hyperosmotic and heat shock by preventing the aggregation of stress-denatured proteins and by disaggregating proteins, also in an autonomous, DnaK-independent fashion. Unfolded proteins bind initially to DnaJ; upon interaction with the DnaJ-bound protein, DnaK hydrolyzes its bound ATP, resulting in the formation of a stable complex. GrpE releases ADP from DnaK; ATP binding to DnaK triggers the release of the substrate protein, thus completing the reaction cycle. Several rounds of ATP-dependent interactions between DnaJ, DnaK and GrpE are required for fully efficient folding. Also involved, together with DnaK and GrpE, in the DNA replication of plasmids through activation of initiation proteins. The chain is Chaperone protein DnaJ from Desulfitobacterium hafniense (strain DSM 10664 / DCB-2).